The primary structure comprises 254 residues: Imidazole glycerol phosphate synthase subunit HisF (254 aa).

Active-site residues include Asp-12 and Asp-131.

The protein belongs to the HisA/HisF family. As to quaternary structure, heterodimer of HisH and HisF.

Its subcellular location is the cytoplasm. The enzyme catalyses 5-[(5-phospho-1-deoxy-D-ribulos-1-ylimino)methylamino]-1-(5-phospho-beta-D-ribosyl)imidazole-4-carboxamide + L-glutamine = D-erythro-1-(imidazol-4-yl)glycerol 3-phosphate + 5-amino-1-(5-phospho-beta-D-ribosyl)imidazole-4-carboxamide + L-glutamate + H(+). It functions in the pathway amino-acid biosynthesis; L-histidine biosynthesis; L-histidine from 5-phospho-alpha-D-ribose 1-diphosphate: step 5/9. Functionally, IGPS catalyzes the conversion of PRFAR and glutamine to IGP, AICAR and glutamate. The HisF subunit catalyzes the cyclization activity that produces IGP and AICAR from PRFAR using the ammonia provided by the HisH subunit. This is Imidazole glycerol phosphate synthase subunit HisF from Frankia casuarinae (strain DSM 45818 / CECT 9043 / HFP020203 / CcI3).